The primary structure comprises 1096 residues: Pentatricopeptide repeat-containing protein At5g55840 (1096 aa).

PPR repeat units lie at residues 122 to 156, 157 to 191, 192 to 226, 227 to 261, 262 to 296, 297 to 331, 332 to 366, 367 to 401, 402 to 436, 437 to 471, 472 to 506, 507 to 541, 542 to 576, 577 to 607, 612 to 646, 647 to 681, 683 to 717, 718 to 752, 753 to 787, 788 to 822, 823 to 857, 858 to 892, 893 to 927, 928 to 962, 963 to 997, 998 to 1032, and 1033 to 1068; these read NPSV…GFNP, SVYT…KICP, DVAT…GYAP, TIVT…GVDA, DVCT…MIHP, NEVT…GLSP, NHVT…GLTP, SEVS…GVCV, GRIT…GIDP, DIVT…GLSP, NGII…GHTR, DHFT…GILP, NTVS…GHHP, TFFT…LHAV, DTVM…SILP, DSYT…GNVL, NKVM…GHTP, DIVT…NGGP, NLTT…GILP, DKLT…GVEV, DRYT…GISL, DKDT…GISP, ESRK…KICP, PNVA…KLVP, TIAS…GLKL, DLVS…GFLA, and NATT…GFIT.

It belongs to the PPR family. P subfamily.

The chain is Pentatricopeptide repeat-containing protein At5g55840 from Arabidopsis thaliana (Mouse-ear cress).